The following is a 468-amino-acid chain: Mitochondrial dynamics protein MID51 (468 aa).

At 1–29 the chain is on the mitochondrial intermembrane side; the sequence is MAGVNGDRKGKKDDNGLGTAIDFVLSNAK. Residues 30-47 form a helical membrane-spanning segment; it reads LVLGVGGAAMLGIATLAV. At 48–468 the chain is on the cytoplasmic side; the sequence is KRMYDRALSA…SDPESLLRTV (421 aa). Residues 50–196 form a dimerization region; it reads MYDRALSAPS…LSGSLYDDLQ (147 aa). A disordered region spans residues 56 to 123; sequence SAPSSPTKAD…RGLARGGRPA (68 aa). Over residues 91–108 the composition is skewed to polar residues; that stretch reads QNVSRSLQTLPTSSSSFK. The important for interaction with DNM1L stretch occupies residues 161–170; the sequence is AALDICAELR. Positions 188, 190, and 202 each coordinate ADP. An important for interaction with DNM1L region spans residues 235-244; that stretch reads RRENLEYFPR. Positions 344, 346, and 372 each coordinate ADP.

Belongs to the MID49/MID51 family. Homodimer.

It is found in the mitochondrion outer membrane. Its function is as follows. Mitochondrial outer membrane protein which regulates mitochondrial fission/fusion dynamics. Promotes the recruitment and association of the fission mediator dynamin-related protein 1 (DNM1L) to the mitochondrial surface independently of the mitochondrial fission FIS1 and MFF proteins. Regulates DNM1L GTPase activity and DNM1L oligomerization. The protein is Mitochondrial dynamics protein MID51 (mief1) of Danio rerio (Zebrafish).